The chain runs to 487 residues: Serine/threonine-protein kinase 4 (487 aa).

Met-1 carries the post-translational modification N-acetylmethionine. Position 3 is a phosphothreonine (Thr-3). In terms of domain architecture, Protein kinase spans Phe-30 to Val-281. Residues Leu-36–Val-44 and Lys-59 each bind ATP. The active-site Proton acceptor is the Asp-149. Thr-183 carries the phosphothreonine; by autocatalysis modification. Ser-265 carries the phosphoserine modification. Residues Leu-290–Arg-310 are a coiled coil. Over residues Lys-303–Val-312 the composition is skewed to basic and acidic residues. The disordered stretch occupies residues Lys-303–Arg-332. The span at Asp-313 to Asp-326 shows a compositional bias: acidic residues. Ser-320 carries the phosphoserine modification. 2 positions are modified to phosphothreonine: Thr-340 and Thr-367. Residue Thr-387 is modified to Phosphothreonine; by PKB/AKT1. Phosphoserine occurs at positions 410 and 414. Tyr-433 is subject to Phosphotyrosine. Positions Tyr-433 to Lys-480 constitute an SARAH domain.

This sequence belongs to the protein kinase superfamily. STE Ser/Thr protein kinase family. STE20 subfamily. Homodimer; mediated via the coiled-coil region. Interacts with NORE1, which inhibits autoactivation. Interacts with and stabilizes SAV1. Interacts with RASSF1. Interacts with FOXO3. Interacts with RASSF2 (via SARAH domain). Interacts with AR, PKB/AKT1, TNNI3 and SIRT1. Interacts with DLG5 (via PDZ domain 3). Interacts with MARK3 in the presence of DLG5. Interacts with SCRIB in the presence of DLG5. The cofactor is Mg(2+). Autophosphorylated on serine and threonine residues. Phosphorylation at Thr-387 by PKB/AKT1, leads to inhibition of its: kinase activity, nuclear translocation and autophosphorylation at Thr-183. It also diminishes its cleavage by caspases and its ability to phosphorylate FOXO3. In terms of processing, proteolytically cleaved by caspase-3 during apoptosis at Asp-326 and Asp-349 resulting in a 37 kDa or a 39 kDa subunit respectively. The 39 kDa subunit is further cleaved into the 37 kDa form. Proteolytic cleavage results in kinase activation and nuclear translocation of the truncated form (MST1/N). It is less likely that cleavage at Asp-349 is a prerequisite for activation as this site is not conserved in the murine ortholog. In terms of tissue distribution, expressed in prostate cancer and levels increase from the normal to the malignant state (at protein level). Ubiquitously expressed.

It is found in the cytoplasm. The protein resides in the nucleus. It carries out the reaction L-seryl-[protein] + ATP = O-phospho-L-seryl-[protein] + ADP + H(+). The enzyme catalyses L-threonyl-[protein] + ATP = O-phospho-L-threonyl-[protein] + ADP + H(+). Inhibited by the C-terminal non-catalytic region. Activated by caspase-cleavage. Full activation also requires homodimerization and autophosphorylation of Thr-183. Activated by RASSF1 which acts by preventing its dephosphorylation. Its function is as follows. Stress-activated, pro-apoptotic kinase which, following caspase-cleavage, enters the nucleus and induces chromatin condensation followed by internucleosomal DNA fragmentation. Key component of the Hippo signaling pathway which plays a pivotal role in organ size control and tumor suppression by restricting proliferation and promoting apoptosis. The core of this pathway is composed of a kinase cascade wherein STK3/MST2 and STK4/MST1, in complex with its regulatory protein SAV1, phosphorylates and activates LATS1/2 in complex with its regulatory protein MOB1, which in turn phosphorylates and inactivates YAP1 oncoprotein and WWTR1/TAZ. Phosphorylation of YAP1 by LATS2 inhibits its translocation into the nucleus to regulate cellular genes important for cell proliferation, cell death, and cell migration. STK3/MST2 and STK4/MST1 are required to repress proliferation of mature hepatocytes, to prevent activation of facultative adult liver stem cells (oval cells), and to inhibit tumor formation. Phosphorylates 'Ser-14' of histone H2B (H2BS14ph) during apoptosis. Phosphorylates FOXO3 upon oxidative stress, which results in its nuclear translocation and cell death initiation. Phosphorylates MOBKL1A, MOBKL1B and RASSF2. Phosphorylates TNNI3 (cardiac Tn-I) and alters its binding affinity to TNNC1 (cardiac Tn-C) and TNNT2 (cardiac Tn-T). Phosphorylates FOXO1 on 'Ser-212' and regulates its activation and stimulates transcription of PMAIP1 in a FOXO1-dependent manner. Phosphorylates SIRT1 and inhibits SIRT1-mediated p53/TP53 deacetylation, thereby promoting p53/TP53 dependent transcription and apoptosis upon DNA damage. Acts as an inhibitor of PKB/AKT1. Phosphorylates AR on 'Ser-650' and suppresses its activity by intersecting with PKB/AKT1 signaling and antagonizing formation of AR-chromatin complexes. This Homo sapiens (Human) protein is Serine/threonine-protein kinase 4.